A 355-amino-acid chain; its full sequence is Erythronate-4-phosphate dehydrogenase (355 aa).

Substrate-binding residues include Ser-45 and Thr-66. Asp-146 lines the NAD(+) pocket. Arg-206 is an active-site residue. Asp-229 lines the NAD(+) pocket. Glu-234 is a catalytic residue. His-251 acts as the Proton donor in catalysis. Gly-254 provides a ligand contact to NAD(+). Tyr-255 provides a ligand contact to substrate.

Belongs to the D-isomer specific 2-hydroxyacid dehydrogenase family. PdxB subfamily. Homodimer.

The protein localises to the cytoplasm. The catalysed reaction is 4-phospho-D-erythronate + NAD(+) = (R)-3-hydroxy-2-oxo-4-phosphooxybutanoate + NADH + H(+). The protein operates within cofactor biosynthesis; pyridoxine 5'-phosphate biosynthesis; pyridoxine 5'-phosphate from D-erythrose 4-phosphate: step 2/5. Catalyzes the oxidation of erythronate-4-phosphate to 3-hydroxy-2-oxo-4-phosphonooxybutanoate. This chain is Erythronate-4-phosphate dehydrogenase, found in Acinetobacter baylyi (strain ATCC 33305 / BD413 / ADP1).